A 449-amino-acid polypeptide reads, in one-letter code: Phosphoglucosamine mutase (449 aa).

Serine 104 acts as the Phosphoserine intermediate in catalysis. The Mg(2+) site is built by serine 104, aspartate 243, aspartate 245, and aspartate 247. Serine 104 bears the Phosphoserine mark.

It belongs to the phosphohexose mutase family. The cofactor is Mg(2+). In terms of processing, activated by phosphorylation.

The catalysed reaction is alpha-D-glucosamine 1-phosphate = D-glucosamine 6-phosphate. Functionally, catalyzes the conversion of glucosamine-6-phosphate to glucosamine-1-phosphate. This chain is Phosphoglucosamine mutase, found in Xanthomonas axonopodis pv. citri (strain 306).